The following is a 122-amino-acid chain: Acyl carrier protein 1, mitochondrial (122 aa).

Residues 1-34 (MALRNAILRHLRVPVQTLGLNQSKIGFLGTIRSF) constitute a mitochondrion transit peptide. The Carrier domain occupies 44-119 (EAVVDRVLDV…LAIEYVYNHP (76 aa)). S79 is modified (O-(pantetheine 4'-phosphoryl)serine).

This sequence belongs to the acyl carrier protein (ACP) family. In terms of assembly, complex I is composed of at least 49 different subunits. Post-translationally, 4'-phosphopantetheine is transferred from CoA to a specific serine of the apo-ACP-like protein.

Its subcellular location is the mitochondrion. Its pathway is lipid metabolism; fatty acid biosynthesis. Functionally, carrier of the growing fatty acid chain in fatty acid biosynthesis. May be involved in the synthesis of short and medium chain fatty acids. Accessory and non-catalytic subunit of the mitochondrial membrane respiratory chain NADH dehydrogenase (Complex I), which functions in the transfer of electrons from NADH to the respiratory chain. In Arabidopsis thaliana (Mouse-ear cress), this protein is Acyl carrier protein 1, mitochondrial (MTACP1).